The sequence spans 559 residues: Glycerol kinase (559 aa).

T20 contributes to the ADP binding site. 3 residues coordinate ATP: T20, S21, and S22. T20 is a sn-glycerol 3-phosphate binding site. R24 contributes to the ADP binding site. 3 residues coordinate sn-glycerol 3-phosphate: R94, E95, and Y148. Glycerol contacts are provided by R94, E95, and Y148. Residue G252 coordinates beta-D-fructose 1,6-bisphosphate. D265 is a binding site for sn-glycerol 3-phosphate. Residues D265 and Q266 each coordinate glycerol. The ADP site is built by T287, G332, G433, and N437. ATP is bound by residues T287, G332, and G433. Residue E501 coordinates Zn(2+). A helical membrane pass occupies residues 532-552 (IFCSLPLGFFIVSSVVMLIGA).

The protein belongs to the FGGY kinase family.

Its subcellular location is the mitochondrion outer membrane. It is found in the nucleus. The protein resides in the cytoplasm. It localises to the cytosol. It catalyses the reaction glycerol + ATP = sn-glycerol 3-phosphate + ADP + H(+). Its pathway is polyol metabolism; glycerol degradation via glycerol kinase pathway; sn-glycerol 3-phosphate from glycerol: step 1/1. Kinase that plays a key role in glycerol metabolism, catalyzing its phosphorylation to produce sn-glycerol 3-phosphate. Sn-glycerol 3-phosphate is a crucial intermediate in various metabolic pathways, such as the synthesis of glycerolipids and triglycerides, glycogenesis, glycolysis and gluconeogenesis. This Bos taurus (Bovine) protein is Glycerol kinase.